The primary structure comprises 562 residues: 63 kDa globulin-like protein (562 aa).

Residues Met1 to Ala23 form the signal peptide. Residues Gln63 to Gly88 show a composition bias toward basic and acidic residues. The segment at Gln63–Arg103 is disordered. Cupin type-1 domains follow at residues Tyr106 to Glu264 and Phe312 to Asp507. The N-linked (GlcNAc...) asparagine glycan is linked to Asn350. Disordered regions lie at residues Pro383–Gln430 and Ser516–Ala550. Residues Arg390–Glu408 show a composition bias toward basic and acidic residues. Positions Glu409 to Gln427 are enriched in acidic residues.

It belongs to the 7S seed storage protein family.

Its subcellular location is the secreted. Functionally, seed storage protein. The protein is 63 kDa globulin-like protein of Oryza sativa subsp. japonica (Rice).